A 258-amino-acid chain; its full sequence is Peptidase inhibitor 15 (258 aa).

Positions 1–21 (MIEMISISAAFLLSLLCETCG) are cleaved as a signal peptide. Positions 22–60 (LVLPKSSDLAIAASNYTIIKPDLSARLDPVKAPKARRKR) are excised as a propeptide. Residues Asn36 and Asn124 are each glycosylated (N-linked (GlcNAc...) asparagine). An SCP domain is found at 71 to 211 (VEYHNQVRGK…RRAVYLVCNY (141 aa)).

This sequence belongs to the CRISP family.

Its subcellular location is the secreted. Its function is as follows. Serine protease inhibitor which displays weak inhibitory activity against trypsin. May be involved in facial patterning during embryonic development. This chain is Peptidase inhibitor 15 (pi15), found in Xenopus laevis (African clawed frog).